A 434-amino-acid polypeptide reads, in one-letter code: Trigger factor (434 aa).

Residues 161–246 enclose the PPIase FKBP-type domain; sequence EDRVVIDFTG…VKQVQAPVLP (86 aa).

This sequence belongs to the FKBP-type PPIase family. Tig subfamily.

It localises to the cytoplasm. The catalysed reaction is [protein]-peptidylproline (omega=180) = [protein]-peptidylproline (omega=0). Functionally, involved in protein export. Acts as a chaperone by maintaining the newly synthesized protein in an open conformation. Functions as a peptidyl-prolyl cis-trans isomerase. This Dechloromonas aromatica (strain RCB) protein is Trigger factor.